The chain runs to 261 residues: Undecaprenyl-diphosphatase (261 aa).

The next 8 membrane-spanning stretches (helical) occupy residues 16-36, 40-60, 82-102, 107-127, 140-160, 183-203, 211-231, and 239-259; these read TEFLPVSSSAHLVLVPWLFGF, GLVFDVALHLGTLVAVLVYFW, FWFLVVATIPGVVVGYFLEDI, LRAPLLIGVLLIMMGGVLYLA, IRFGDAMAIGLSQALAIIPGV, FSFLLSTPIIFGAGLMQMLKM, SFVLGVFTSAVVGFLAIWFLI, and FNIFVIYRVLLGLTVIVIALL.

Belongs to the UppP family.

Its subcellular location is the cell membrane. It catalyses the reaction di-trans,octa-cis-undecaprenyl diphosphate + H2O = di-trans,octa-cis-undecaprenyl phosphate + phosphate + H(+). In terms of biological role, catalyzes the dephosphorylation of undecaprenyl diphosphate (UPP). Confers resistance to bacitracin. This is Undecaprenyl-diphosphatase from Desulforudis audaxviator (strain MP104C).